A 70-amino-acid chain; its full sequence is Large ribosomal subunit protein eL38 (70 aa).

This sequence belongs to the eukaryotic ribosomal protein eL38 family.

This Branchiostoma belcheri (Amphioxus) protein is Large ribosomal subunit protein eL38 (RPL38).